Consider the following 324-residue polypeptide: Lactonase drp35 (324 aa).

The Ca(2+) site is built by Glu-47, Ser-109, Gly-111, Asp-129, Thr-132, Tyr-134, Asp-137, Asn-184, Asp-235, and Ser-236. Residue Asp-235 is the Proton donor of the active site.

It belongs to the SMP-30/CGR1 family. Ca(2+) is required as a cofactor.

It is found in the cytoplasm. Functionally, exhibits lactonase activity. Acts in cells with perturbed membrane integrity and is possibly related to the membrane homeostasis. In Staphylococcus saprophyticus subsp. saprophyticus (strain ATCC 15305 / DSM 20229 / NCIMB 8711 / NCTC 7292 / S-41), this protein is Lactonase drp35 (drp35).